Consider the following 483-residue polypeptide: Glutamyl-tRNA(Gln) amidotransferase subunit A (483 aa).

Catalysis depends on charge relay system residues lysine 76 and serine 151. Catalysis depends on serine 175, which acts as the Acyl-ester intermediate.

It belongs to the amidase family. GatA subfamily. In terms of assembly, heterotrimer of A, B and C subunits.

It carries out the reaction L-glutamyl-tRNA(Gln) + L-glutamine + ATP + H2O = L-glutaminyl-tRNA(Gln) + L-glutamate + ADP + phosphate + H(+). In terms of biological role, allows the formation of correctly charged Gln-tRNA(Gln) through the transamidation of misacylated Glu-tRNA(Gln) in organisms which lack glutaminyl-tRNA synthetase. The reaction takes place in the presence of glutamine and ATP through an activated gamma-phospho-Glu-tRNA(Gln). In Pseudomonas syringae pv. syringae (strain B728a), this protein is Glutamyl-tRNA(Gln) amidotransferase subunit A.